The primary structure comprises 134 residues: ATP synthase epsilon chain, chloroplastic (134 aa).

It belongs to the ATPase epsilon chain family. F-type ATPases have 2 components, CF(1) - the catalytic core - and CF(0) - the membrane proton channel. CF(1) has five subunits: alpha(3), beta(3), gamma(1), delta(1), epsilon(1). CF(0) has three main subunits: a, b and c.

Its subcellular location is the plastid. The protein resides in the chloroplast thylakoid membrane. Its function is as follows. Produces ATP from ADP in the presence of a proton gradient across the membrane. The polypeptide is ATP synthase epsilon chain, chloroplastic (Liriodendron tulipifera (Tuliptree)).